The sequence spans 272 residues: Nitrogenase iron protein (272 aa).

ATP is bound at residue 8-15; that stretch reads GKGGIGKS. Position 94 (C94) interacts with [4Fe-4S] cluster. R97 carries the post-translational modification ADP-ribosylarginine; by dinitrogenase reductase ADP-ribosyltransferase. C129 lines the [4Fe-4S] cluster pocket.

This sequence belongs to the NifH/BchL/ChlL family. Homodimer. [4Fe-4S] cluster is required as a cofactor. Post-translationally, the reversible ADP-ribosylation of Arg-97 inactivates the nitrogenase reductase and regulates nitrogenase activity.

It catalyses the reaction N2 + 8 reduced [2Fe-2S]-[ferredoxin] + 16 ATP + 16 H2O = H2 + 8 oxidized [2Fe-2S]-[ferredoxin] + 2 NH4(+) + 16 ADP + 16 phosphate + 6 H(+). Its function is as follows. The key enzymatic reactions in nitrogen fixation are catalyzed by the nitrogenase complex, which has 2 components: the iron protein and the molybdenum-iron protein. This is Nitrogenase iron protein from Desulforamulus reducens (strain ATCC BAA-1160 / DSM 100696 / MI-1) (Desulfotomaculum reducens).